The chain runs to 491 residues: Glycogen synthase (491 aa).

Arg20 is an ADP-alpha-D-glucose binding site.

The protein belongs to the glycosyltransferase 1 family. Bacterial/plant glycogen synthase subfamily.

The enzyme catalyses [(1-&gt;4)-alpha-D-glucosyl](n) + ADP-alpha-D-glucose = [(1-&gt;4)-alpha-D-glucosyl](n+1) + ADP + H(+). It functions in the pathway glycan biosynthesis; glycogen biosynthesis. Its function is as follows. Synthesizes alpha-1,4-glucan chains using ADP-glucose. The sequence is that of Glycogen synthase from Prosthecochloris aestuarii (strain DSM 271 / SK 413).